The chain runs to 423 residues: Protein CLP1 homolog (423 aa).

Residues E19, K60, and 122 to 127 (DVGKTT) contribute to the ATP site.

This sequence belongs to the Clp1 family. Clp1 subfamily.

It is found in the nucleus. In terms of biological role, required for endonucleolytic cleavage during polyadenylation-dependent pre-mRNA 3'-end formation. This is Protein CLP1 homolog (cbc) from Culex quinquefasciatus (Southern house mosquito).